The chain runs to 148 residues: Cyanate hydratase (148 aa).

Active-site residues include Arg-89, Glu-92, and Ser-115.

The protein belongs to the cyanase family.

The enzyme catalyses cyanate + hydrogencarbonate + 3 H(+) = NH4(+) + 2 CO2. Catalyzes the reaction of cyanate with bicarbonate to produce ammonia and carbon dioxide. The protein is Cyanate hydratase of Sulfurisphaera tokodaii (strain DSM 16993 / JCM 10545 / NBRC 100140 / 7) (Sulfolobus tokodaii).